We begin with the raw amino-acid sequence, 208 residues long: Phosphoheptose isomerase (208 aa).

The SIS domain occupies 38–200 (MAVTLAKGHK…LFENVLALQP (163 aa)). Residue 53–55 (NGG) coordinates substrate. 2 residues coordinate Zn(2+): His-62 and Glu-66. Substrate-binding positions include Glu-66, 95–96 (ND), 121–123 (STS), Ser-126, and Gln-173. The Zn(2+) site is built by Gln-173 and His-181.

This sequence belongs to the SIS family. GmhA subfamily. In terms of assembly, homotetramer. The cofactor is Zn(2+).

It is found in the cytoplasm. The catalysed reaction is 2 D-sedoheptulose 7-phosphate = D-glycero-alpha-D-manno-heptose 7-phosphate + D-glycero-beta-D-manno-heptose 7-phosphate. The protein operates within carbohydrate biosynthesis; D-glycero-D-manno-heptose 7-phosphate biosynthesis; D-glycero-alpha-D-manno-heptose 7-phosphate and D-glycero-beta-D-manno-heptose 7-phosphate from sedoheptulose 7-phosphate: step 1/1. Its function is as follows. Catalyzes the isomerization of sedoheptulose 7-phosphate in D-glycero-D-manno-heptose 7-phosphate. The chain is Phosphoheptose isomerase from Nitratidesulfovibrio vulgaris (strain ATCC 29579 / DSM 644 / CCUG 34227 / NCIMB 8303 / VKM B-1760 / Hildenborough) (Desulfovibrio vulgaris).